The primary structure comprises 429 residues: Protein phosphatase 2C homolog 2 (429 aa).

In terms of domain architecture, PPM-type phosphatase spans 16-291; that stretch reads LYGLSAMQGW…DNMTMIIIGL (276 aa). The Mn(2+) site is built by D64, G65, D233, and D282. Disordered stretches follow at residues 320-348 and 384-429; these read YGKS…NDRS and RDVT…SASS. The segment covering 384-397 has biased composition (basic and acidic residues); that stretch reads RDVTNHLQHDKAEE. Positions 405 to 419 are enriched in low complexity; it reads SESPSSANKNSSGSG.

Belongs to the PP2C family. Mg(2+) serves as cofactor. The cofactor is Mn(2+).

The protein resides in the cytoplasm. It is found in the nucleus. It catalyses the reaction O-phospho-L-seryl-[protein] + H2O = L-seryl-[protein] + phosphate. The catalysed reaction is O-phospho-L-threonyl-[protein] + H2O = L-threonyl-[protein] + phosphate. In terms of biological role, dephosphorylating regulator for many key proteins. Dephosphorylates sakA, to negatively regulate the stress-activated p38MAPK cascade. This chain is Protein phosphatase 2C homolog 2, found in Aspergillus fumigatus (strain ATCC MYA-4609 / CBS 101355 / FGSC A1100 / Af293) (Neosartorya fumigata).